The sequence spans 270 residues: Metallo-beta-lactamase type 2 (270 aa).

An N-terminal signal peptide occupies residues 1–28; it reads MELPNIMHPVAKLSTALAAALMLSGCMP. The Zn(2+) site is built by H120, H122, D124, H189, and C208. Substrate is bound by residues K211 and N220. A Zn(2+)-binding site is contributed by H250.

Belongs to the metallo-beta-lactamase superfamily. Class-B beta-lactamase family. In terms of assembly, monomer. The cofactor is Zn(2+).

The protein resides in the periplasm. The catalysed reaction is a beta-lactam + H2O = a substituted beta-amino acid. With respect to regulation, inhibits by captopril, thiorphan, dimercaprol and tiopronin. This enzyme is not susceptible to inactivation by the beta-lactamase-blocking agents clavulanic acid. Functionally, confers resistance to the different beta-lactams antibiotics (penicillin, cephalosporin and carbapenem) via the hydrolysis of the beta-lactam ring. Does not confer resistance to the polymixin colistin or the fluoroquinolone ciprofloxacin. The protein is Metallo-beta-lactamase type 2 of Klebsiella pneumoniae.